The chain runs to 179 residues: Large ribosomal subunit protein uL5 (179 aa).

The protein belongs to the universal ribosomal protein uL5 family. Part of the 50S ribosomal subunit; part of the 5S rRNA/L5/L18/L25 subcomplex. Contacts the 5S rRNA and the P site tRNA. Forms a bridge to the 30S subunit in the 70S ribosome.

This is one of the proteins that bind and probably mediate the attachment of the 5S RNA into the large ribosomal subunit, where it forms part of the central protuberance. In the 70S ribosome it contacts protein S13 of the 30S subunit (bridge B1b), connecting the 2 subunits; this bridge is implicated in subunit movement. Contacts the P site tRNA; the 5S rRNA and some of its associated proteins might help stabilize positioning of ribosome-bound tRNAs. This chain is Large ribosomal subunit protein uL5, found in Cellvibrio japonicus (strain Ueda107) (Pseudomonas fluorescens subsp. cellulosa).